We begin with the raw amino-acid sequence, 192 residues long: Small ribosomal subunit protein uS4c-2 (192 aa).

The S4 RNA-binding domain occupies 91-155; that stretch reads TRLDHLVYRA…PKPPEYLPPY (65 aa).

This sequence belongs to the universal ribosomal protein uS4 family. Part of the 30S ribosomal subunit. Contacts protein S5. The interaction surface between S4 and S5 is involved in control of translational fidelity.

The protein localises to the plastid. The protein resides in the chloroplast. In terms of biological role, one of the primary rRNA binding proteins, it binds directly to 16S rRNA where it nucleates assembly of the body of the 30S subunit. Functionally, with S5 and S12 plays an important role in translational accuracy. This Cyanidium caldarium (Red alga) protein is Small ribosomal subunit protein uS4c-2.